Reading from the N-terminus, the 498-residue chain is ATP synthase subunit beta, chloroplastic (498 aa).

172-179 (GGAGVGKT) provides a ligand contact to ATP.

The protein belongs to the ATPase alpha/beta chains family. As to quaternary structure, F-type ATPases have 2 components, CF(1) - the catalytic core - and CF(0) - the membrane proton channel. CF(1) has five subunits: alpha(3), beta(3), gamma(1), delta(1), epsilon(1). CF(0) has four main subunits: a(1), b(1), b'(1) and c(9-12).

Its subcellular location is the plastid. The protein localises to the chloroplast thylakoid membrane. It carries out the reaction ATP + H2O + 4 H(+)(in) = ADP + phosphate + 5 H(+)(out). In terms of biological role, produces ATP from ADP in the presence of a proton gradient across the membrane. The catalytic sites are hosted primarily by the beta subunits. The protein is ATP synthase subunit beta, chloroplastic of Whiteheadia bifolia (Elephants ears).